We begin with the raw amino-acid sequence, 827 residues long: DNA gyrase subunit A (827 aa).

The region spanning 38-501 (LPDARDGLKP…SYENIDIEDL (464 aa)) is the Topo IIA-type catalytic domain. Residue Tyr-126 is the O-(5'-phospho-DNA)-tyrosine intermediate of the active site. The short motif at 528–534 (QNRGGKG) is the GyrA-box element.

It belongs to the type II topoisomerase GyrA/ParC subunit family. In terms of assembly, heterotetramer, composed of two GyrA and two GyrB chains. In the heterotetramer, GyrA contains the active site tyrosine that forms a transient covalent intermediate with DNA, while GyrB binds cofactors and catalyzes ATP hydrolysis.

The protein localises to the cytoplasm. The enzyme catalyses ATP-dependent breakage, passage and rejoining of double-stranded DNA.. Its function is as follows. A type II topoisomerase that negatively supercoils closed circular double-stranded (ds) DNA in an ATP-dependent manner to modulate DNA topology and maintain chromosomes in an underwound state. Negative supercoiling favors strand separation, and DNA replication, transcription, recombination and repair, all of which involve strand separation. Also able to catalyze the interconversion of other topological isomers of dsDNA rings, including catenanes and knotted rings. Type II topoisomerases break and join 2 DNA strands simultaneously in an ATP-dependent manner. The polypeptide is DNA gyrase subunit A (Helicobacter pylori (strain ATCC 700392 / 26695) (Campylobacter pylori)).